Consider the following 250-residue polypeptide: 1-(5-phosphoribosyl)-5-[(5-phosphoribosylamino)methylideneamino] imidazole-4-carboxamide isomerase (250 aa).

Residue Asp-8 is the Proton acceptor of the active site. The Proton donor role is filled by Asp-131.

This sequence belongs to the HisA/HisF family.

The protein resides in the cytoplasm. The catalysed reaction is 1-(5-phospho-beta-D-ribosyl)-5-[(5-phospho-beta-D-ribosylamino)methylideneamino]imidazole-4-carboxamide = 5-[(5-phospho-1-deoxy-D-ribulos-1-ylimino)methylamino]-1-(5-phospho-beta-D-ribosyl)imidazole-4-carboxamide. It functions in the pathway amino-acid biosynthesis; L-histidine biosynthesis; L-histidine from 5-phospho-alpha-D-ribose 1-diphosphate: step 4/9. This Paraburkholderia xenovorans (strain LB400) protein is 1-(5-phosphoribosyl)-5-[(5-phosphoribosylamino)methylideneamino] imidazole-4-carboxamide isomerase.